The primary structure comprises 811 residues: MARNSKATDTPKTVVEKQSRKRKQDVEDAEESSSDEELQVEGILDDAASEDEESDSEDADKEDDEEEELEGDSDEEFNELLGEEEDLSDVDSEEFSDEPRDETASITDKLSGTKIRSYSNATEDEENEVHTKFSDGRPRIIKPEINPIYDSDDSDNENFNTIGNIPLSAYEEMPHIGYDINGKRIMRPAKGSALDQLLESIDLPEGWTGLFDQNTGTSLKITDDELELIRKIQAQESTDENINPYEPTIEWFTSKTEVMPLTAVPEPKRRFVPSKHEAKKVMKIVRAIREGRIVPPNKVKEQQEEEKYNFDLWNDNESETKDHIMNLRAPKLPPPTNEESYNPPEEYLMDEEEKKKWLEMEPEDRDKNYIPQKYNSLRKVPGYQEGLRERFERCLDLYLAPRTRHNKLNIDPDSLIPELPSPKDLRPFPIRCSTIFQGHTEKIRTLSISPDGLWLATGSDDGSVRIWEILTGRQVYKTVLVADDNTDDNIESLEWNPDSNSGILAAIAGEHIYLIVPPIFGFDIENNGRLRIESGWGYDTFGNKSKTKNSNIKVNSDDEDEEVEKADTNTGKKDVCKWFTPNTEQSQAGISAIIQCRKTVKKISWHRKGDYFVTVSPDSGHSSVLIHQLSKHLSQSPFKKSKGIIMDAKFHPFKPQLFVASQRYIRIYDLAQQVLVKKLMPGARWLSNIDIHPRGDNLLASSYDKRVLWHDLDLSSTPYKTLRYHDKAVRSIKFHKANLPLFASASDDGSIHVFHGTVYDDLMTNPLLVPLKKLTGHKIINSLGVLDLVWHPKEAWLFSAGADGTARLWTT.

Residues 1 to 11 (MARNSKATDTP) show a composition bias toward polar residues. The disordered stretch occupies residues 1-138 (MARNSKATDT…VHTKFSDGRP (138 aa)). A compositionally biased stretch (acidic residues) spans 27-96 (EDAEESSSDE…LSDVDSEEFS (70 aa)). Residues 104 to 121 (ASITDKLSGTKIRSYSNA) are compositionally biased toward polar residues. The segment covering 128-138 (EVHTKFSDGRP) has biased composition (basic and acidic residues). Residues 270 to 386 (RFVPSKHEAK…LRKVPGYQEG (117 aa)) form a required for interaction with NOP7 region. The required for interaction with YTM1 stretch occupies residues 386 to 422 (GLRERFERCLDLYLAPRTRHNKLNIDPDSLIPELPSP). WD repeat units lie at residues 438–477 (GHTE…QVYK) and 485–525 (NTDD…FDIE). The interval 547 to 566 (TKNSNIKVNSDDEDEEVEKA) is disordered. WD repeat units follow at residues 595-637 (QCRK…SQSP), 640-678 (KSKG…LVKK), 681-720 (PGAR…TPYK), 724-764 (YHDK…DLMT), and 780-811 (INSL…LWTT).

This sequence belongs to the WD repeat BOP1/ERB1 family. Component of the NOP7 complex, composed of ERB1, NOP7 and YTM1. The complex is held together by ERB1, which interacts with NOP7 via its N-terminal domain and with YTM1 via a high-affinity interaction between the seven-bladed beta-propeller domains of the 2 proteins. The NOP7 complex associates with the 66S pre-ribosome.

It is found in the nucleus. Its subcellular location is the nucleolus. It localises to the nucleoplasm. Its function is as follows. Component of the NOP7 complex, which is required for maturation of the 25S and 5.8S ribosomal RNAs and formation of the 60S ribosome. The polypeptide is Ribosome biogenesis protein ERB1 (Debaryomyces hansenii (strain ATCC 36239 / CBS 767 / BCRC 21394 / JCM 1990 / NBRC 0083 / IGC 2968) (Yeast)).